We begin with the raw amino-acid sequence, 239 residues long: IkB-like protein (239 aa).

4 ANK repeats span residues 48–80, 87–118, 124–153, and 158–187; these read SKIT…EIIS, DGNS…GIKV, NGIT…NPNQ, and KGFN…KPLF. Positions 81–87 match the Nuclear localization signal motif; that stretch reads HYRRDKD. Residues 203–214 carry the Nuclear localization signal motif; it reads KKKPKIIITSCE. The PxIxITxC motif; Interaction with host PPP3CA signature appears at 206–213; the sequence is PKIIITSC. Residues 228–231 carry the FLCV motif motif; that stretch reads FLCV.

The protein belongs to the asfivirus A238L family. As to quaternary structure, interacts with host PPIA. Interacts with host PPP3CA/Calcineurin. Interacts with host RELA/p65; interaction of the 32 kDa form with host RELA results in the formation of a stable complex with NF-kappa-B. Interacts with host PPP3R1. Interacts with host EP300; this interaction inhibits the association of host EP300 with host RELA, JUN and NFATC2. Post-translationally, the protein exists in a 28 kDa and a 32 kDa form, probably due to post-translational modifications which are neither phosphorylation, nor sumoylation.

It is found in the host nucleus. The protein resides in the host cytoplasm. In terms of biological role, ikB-like protein that inhibits the binding of NF-kappa-B to DNA, thereby downregulating pro-inflammatory cytokine production. Forms a heterodimer with the NF-kappa-B subunit RELA/p65 and prevents the activation of the NF-kappa-B transcription factor. Inhibits calcineurin function, which is required for the induction of nuclear factor of activated T cells (NFAT)-dependent immune response genes. Prevents the binding of substrates to calcineurin without affecting the phosphatase activity. Does not contain the serine residues that are phosphorylated by host IkB kinase and thus is not degraded following stimulation of the NFkB pathway. The sequence is that of IkB-like protein (A238L) from Ornithodoros (relapsing fever ticks).